Reading from the N-terminus, the 1113-residue chain is Lon protease homolog, mitochondrial (1113 aa).

Residues 1–61 (MLRGQTLPWR…RAFSSSSIRR (61 aa)) constitute a mitochondrion transit peptide. A disordered region spans residues 42 to 196 (SRLHRSLPTS…SGEKALQKPS (155 aa)). Composition is skewed to basic and acidic residues over residues 64–99 (KPPP…RKAA), 124–143 (KAGA…KDGN), and 178–192 (DGGK…EKAL). One can recognise a Lon N-terminal domain in the interval 204–456 (VMAIPIAKRP…KALVVLKKEL (253 aa)). 609–616 (GPPGVGKT) is an ATP binding site. Over residues 828 to 858 (LTDEGKAVQEESQKETESPDSKSPVDPEKST) the composition is skewed to basic and acidic residues. The tract at residues 828 to 864 (LTDEGKAVQEESQKETESPDSKSPVDPEKSTTETPRV) is disordered. A Lon proteolytic domain is found at 898-1084 (TFPPGVTMGL…SEVFDLLFTD (187 aa)). Catalysis depends on residues serine 990 and lysine 1033.

Belongs to the peptidase S16 family. In terms of assembly, homohexamer or homoheptamer. Organized in a ring with a central cavity.

The protein resides in the mitochondrion matrix. The enzyme catalyses Hydrolysis of proteins in presence of ATP.. Functionally, ATP-dependent serine protease that mediates the selective degradation of misfolded, unassembled or oxidatively damaged polypeptides as well as certain short-lived regulatory proteins in the mitochondrial matrix. May also have a chaperone function in the assembly of inner membrane protein complexes. Participates in the regulation of mitochondrial gene expression and in the maintenance of the integrity of the mitochondrial genome. Binds to mitochondrial DNA in a site-specific manner. This Aspergillus niger (strain ATCC MYA-4892 / CBS 513.88 / FGSC A1513) protein is Lon protease homolog, mitochondrial (pim1).